The chain runs to 313 residues: UPF0252 protein AF_0384 (313 aa).

Belongs to the UPF0252 family.

In Archaeoglobus fulgidus (strain ATCC 49558 / DSM 4304 / JCM 9628 / NBRC 100126 / VC-16), this protein is UPF0252 protein AF_0384.